The following is a 471-amino-acid chain: UDP-glycosyltransferase 71A15 (471 aa).

Residues S282, 348-349 (WA), 366-374 (HCGWNSTLE), and 388-391 (YAEQ) each bind UDP-alpha-D-glucose.

This sequence belongs to the UDP-glycosyltransferase family.

Glycosyltransferase that possesses chalcone and flavonol 2'-O-glycosyltransferase activity. Converts phloretin to phlorizin (phloretin 2'-O-glucoside), a potent antioxidant. Possesses glycosyltransferase activity toward, naringenin, naringenin chalcone, eriodictyol, eriodictyol chalcone, apigenin, luteolin, kaempferol, quercetin, isoliquiritigenin, butein and caffeic acid. Can convert phloretin to phloretin 4'-O-glucoside and phloretin 4-O-glucoside. The protein is UDP-glycosyltransferase 71A15 of Malus domestica (Apple).